A 1217-amino-acid chain; its full sequence is MFLYNLTLQRATGISFAIHGNFSGTKQQEIVVSRGKILELLRPDPNTGKVHTLLTVEVFGVIRSLMAFRLTGGTKDYIVVGSDSGRIVILEYQPSKNMFEKIHQETFGKSGCRRIVPGQFLAVDPKGRAVMISAIEKQKLVYILNRDAAARLTISSPLEAHKANTLVYHVVGVDVGFENPMFACLEMDYEEADNDPTGEAAANTQQTLTFYELDLGLNHVVRKYSEPLEEHGNFLITVPGGSDGPSGVLICSENYITYKNFGDQPDIRCPIPRRRNDLDDPERGMIFVCSATHKTKSMFFFLAQTEQGDIFKITLETDEDMVTEIRLKYFDTVPVAAAMCVLKTGFLFVASEFGNHYLYQIAHLGDDDEEPEFSSAMPLEEGDTFFFQPRPLKNLVLVDELDSLSPILFCQIADLANEDTPQLYVACGRGPRSSLRVLRHGLEVSEMAVSELPGNPNAVWTVRRHIEDEFDAYIIVSFVNATLVLSIGETVEEVTDSGFLGTTPTLSCSLLGDDALVQVYPDGIRHIRADKRVNEWKTPGKKTIVKCAVNQRQVVIALTGGELVYFEMDPSGQLNEYTERKEMSADVVCMSLANVPPGEQRSRFLAVGLVDNTVRIISLDPSDCLQPLSMQALPAQPESLCIVEMGGTEKQDELGERGSIGFLYLNIGLQNGVLLRTVLDPVTGDLSDTRTRYLGSRPVKLFRVRMQGQEAVLAMSSRSWLSYSYQSRFHLTPLSYETLEFASGFASEQCPEGIVAISTNTLRILALEKLGAVFNQVAFPLQYTPRKFVIHPESNNLIIIETDHNAYTEATKAQRKQQMAEEMVEAAGEDERELAAEMAAAFLNENLPESIFGAPKAGNGQWASVIRVMNPIQGNTLDLVQLEQNEAAFSVAVCRFSNTGEDWYVLVGVAKDLILNPRSVAGGFVYTYKLVNNGEKLEFLHKTPVEEVPAAIAPFQGRVLIGVGKLLRVYDLGKKKLLRKCENKHIANYISGIQTIGHRVIVSDVQESFIWVRYKRNENQLIIFADDTYPRWVTTASLLDYDTVAGADKFGNICVVRLPPNTNDEVDEDPTGNKALWDRGLLNGASQKAEVIMNYHVGETVLSLQKTTLIPGGSESLVYTTLSGGIGILVPFTSHEDHDFFQHVEMHLRSEHPPLCGRDHLSFRSYYFPVKNVIDGDLCEQFNSMEPNKQKNVSEELDRTPPEVSKKLEDIRTRYAF.

2 interaction with PHF5A, SF3B1 and SF3B5 regions span residues 105–119 (ETFG…VPGQ) and 145–168 (NRDA…TLVY). Serine 156 carries the phosphoserine modification. Interaction with SF3B1 and SF3B5 regions lie at residues 193–231 (DNDP…LEEH) and 786–804 (RKFV…ETDH). Positions 1028-1049 (TYPRWVTTASLLDYDTVAGADK) are interaction with SF3B1. Residues 1100–1123 (TVLSLQKTTLIPGGSESLVYTTLS) are interaction with SF3B5. Residue threonine 1200 is modified to Phosphothreonine.

This sequence belongs to the RSE1 family. Component of the 17S U2 SnRNP complex, a ribonucleoprotein complex that contains small nuclear RNA (snRNA) U2 and a number of specific proteins. Part of the SF3B subcomplex of the 17S U2 SnRNP complex. SF3B associates with the splicing subcomplex SF3A and a 12S RNA unit to form the U2 small nuclear ribonucleoproteins complex (U2 snRNP). Within the SF3B subcomplex, interacts directly with SF3B1 (via HEAT domain), SF3B5 and PHF5A. Identified in the spliceosome A complex; remains associated with the spliceosome throughout the splicing process. Component of the spliceosome B complex. Identified in the spliceosome C complex. Identified in the spliceosome E complex. Component of the minor (U12-type spliceosome) spliceosome. Within this complex, interacts with SCNM1. Associates with the STAGA transcription coactivator-HAT complex. Interacts with SUPT3H. Interacts with TAF3.

It localises to the nucleus. Component of the 17S U2 SnRNP complex of the spliceosome, a large ribonucleoprotein complex that removes introns from transcribed pre-mRNAs. The 17S U2 SnRNP complex (1) directly participates in early spliceosome assembly and (2) mediates recognition of the intron branch site during pre-mRNA splicing by promoting the selection of the pre-mRNA branch-site adenosine, the nucleophile for the first step of splicing. Within the 17S U2 SnRNP complex, SF3B3 is part of the SF3B subcomplex, which is required for 'A' complex assembly formed by the stable binding of U2 snRNP to the branchpoint sequence in pre-mRNA. Sequence independent binding of SF3A and SF3B subcomplexes upstream of the branch site is essential, it may anchor U2 snRNP to the pre-mRNA. May also be involved in the assembly of the 'E' complex. Also acts as a component of the minor spliceosome, which is involved in the splicing of U12-type introns in pre-mRNAs. The polypeptide is Splicing factor 3B subunit 3 (SF3B3) (Bos taurus (Bovine)).